A 308-amino-acid polypeptide reads, in one-letter code: HPr kinase/phosphorylase (308 aa).

Active-site residues include histidine 136 and lysine 157. 151–158 (GESGIGKS) contributes to the ATP binding site. Serine 158 serves as a coordination point for Mg(2+). The active-site Proton acceptor; for phosphorylation activity. Proton donor; for dephosphorylation activity is the aspartate 175. Positions 198–207 (IEVRGMGIID) are important for the catalytic mechanism of both phosphorylation and dephosphorylation. Glutamate 199 is a Mg(2+) binding site. Arginine 240 is a catalytic residue. The important for the catalytic mechanism of dephosphorylation stretch occupies residues 261–266 (PIRPGR).

This sequence belongs to the HPrK/P family. Homohexamer. Mg(2+) is required as a cofactor.

It carries out the reaction [HPr protein]-L-serine + ATP = [HPr protein]-O-phospho-L-serine + ADP + H(+). It catalyses the reaction [HPr protein]-O-phospho-L-serine + phosphate + H(+) = [HPr protein]-L-serine + diphosphate. Its function is as follows. Catalyzes the ATP- as well as the pyrophosphate-dependent phosphorylation of a specific serine residue in HPr, a phosphocarrier protein of the phosphoenolpyruvate-dependent sugar phosphotransferase system (PTS). HprK/P also catalyzes the pyrophosphate-producing, inorganic phosphate-dependent dephosphorylation (phosphorolysis) of seryl-phosphorylated HPr (P-Ser-HPr). The two antagonistic activities of HprK/P are regulated by several intracellular metabolites, which change their concentration in response to the absence or presence of rapidly metabolisable carbon sources (glucose, fructose, etc.) in the growth medium. Therefore, by controlling the phosphorylation state of HPr, HPrK/P is a sensor enzyme that plays a major role in the regulation of carbon metabolism and sugar transport: it mediates carbon catabolite repression (CCR), and regulates PTS-catalyzed carbohydrate uptake and inducer exclusion. This Clostridium kluyveri (strain NBRC 12016) protein is HPr kinase/phosphorylase.